The primary structure comprises 82 residues: Small ribosomal subunit protein bS16 (82 aa).

This sequence belongs to the bacterial ribosomal protein bS16 family.

This chain is Small ribosomal subunit protein bS16, found in Serratia proteamaculans (strain 568).